We begin with the raw amino-acid sequence, 123 residues long: Large ribosomal subunit protein uL14 (123 aa).

This sequence belongs to the universal ribosomal protein uL14 family. Part of the 50S ribosomal subunit. Forms a cluster with proteins L3 and L19. In the 70S ribosome, L14 and L19 interact and together make contacts with the 16S rRNA in bridges B5 and B8.

Its function is as follows. Binds to 23S rRNA. Forms part of two intersubunit bridges in the 70S ribosome. The polypeptide is Large ribosomal subunit protein uL14 (Vibrio vulnificus (strain CMCP6)).